The primary structure comprises 269 residues: Tryptophan synthase alpha chain (269 aa).

Active-site proton acceptor residues include glutamate 49 and aspartate 60.

It belongs to the TrpA family. As to quaternary structure, tetramer of two alpha and two beta chains.

The enzyme catalyses (1S,2R)-1-C-(indol-3-yl)glycerol 3-phosphate + L-serine = D-glyceraldehyde 3-phosphate + L-tryptophan + H2O. The protein operates within amino-acid biosynthesis; L-tryptophan biosynthesis; L-tryptophan from chorismate: step 5/5. In terms of biological role, the alpha subunit is responsible for the aldol cleavage of indoleglycerol phosphate to indole and glyceraldehyde 3-phosphate. This is Tryptophan synthase alpha chain from Proteus mirabilis (strain HI4320).